We begin with the raw amino-acid sequence, 218 residues long: Major NAD(P)H-flavin oxidoreductase (218 aa).

FMN-binding positions include 12–16 and asparagine 73; that span reads RYTSK. 154-159 serves as a coordination point for NAD(+); that stretch reads LARLNI. FMN is bound by residues 165–166 and 206–208; these read EG and KSR.

Belongs to the nitroreductase family. In terms of assembly, homodimer. It depends on FMN as a cofactor.

Functionally, involved in bioluminescence. It is a good supplier of reduced flavin mononucleotide (FMNH2) to the bioluminescence reaction. Major FMN reductase. It is capable of using both NADH and NADPH as electron donors. As electron acceptor, FMN is the most effective, FAD is considerably effective, and riboflavin is the least effective. The sequence is that of Major NAD(P)H-flavin oxidoreductase from Aliivibrio fischeri (Vibrio fischeri).